The sequence spans 144 residues: Small ribosomal subunit protein uS12 (144 aa).

Residues 1-55 (MPTINQLVRKGREDKVVKSKSPALQKGYNSFKKSQTNQSSPQKRGVCTRVGTMTP) are disordered. Over residues 27–42 (GYNSFKKSQTNQSSPQ) the composition is skewed to polar residues. Residue aspartate 102 is modified to 3-methylthioaspartic acid. The tract at residues 119 to 144 (GVNNRKQGRSKYGTKRPKPGQAAAKK) is disordered. The segment covering 124–144 (KQGRSKYGTKRPKPGQAAAKK) has biased composition (basic residues).

Belongs to the universal ribosomal protein uS12 family. As to quaternary structure, part of the 30S ribosomal subunit. Contacts proteins S8 and S17. May interact with IF1 in the 30S initiation complex.

With S4 and S5 plays an important role in translational accuracy. Functionally, interacts with and stabilizes bases of the 16S rRNA that are involved in tRNA selection in the A site and with the mRNA backbone. Located at the interface of the 30S and 50S subunits, it traverses the body of the 30S subunit contacting proteins on the other side and probably holding the rRNA structure together. The combined cluster of proteins S8, S12 and S17 appears to hold together the shoulder and platform of the 30S subunit. The protein is Small ribosomal subunit protein uS12 of Brevibacillus brevis (strain 47 / JCM 6285 / NBRC 100599).